The chain runs to 215 residues: Peroxiredoxin-5, mitochondrial (215 aa).

The N-terminal 53 residues, methionine 1–alanine 53, are a transit peptide targeting the mitochondrion. Positions isoleucine 57–leucine 215 constitute a Thioredoxin domain. The residue at position 76 (lysine 76) is an N6-acetyllysine. Position 84 is an N6-acetyllysine; alternate (lysine 84). Lysine 84 is modified (N6-succinyllysine; alternate). Cysteine 101 (cysteine sulfenic acid (-SOH) intermediate) is an active-site residue. A lipid anchor (S-palmitoyl cysteine) is attached at cysteine 101. Residues cysteine 101 and cysteine 205 are joined by a disulfide bond. Lysine 117 is subject to N6-succinyllysine. 2 positions are modified to phosphoserine: serine 172 and serine 183. Residues serine 213–leucine 215 carry the Microbody targeting signal motif.

Belongs to the peroxiredoxin family. Prx5 subfamily. As to quaternary structure, monomer. In terms of processing, S-palmitoylated. Palmitoylation occurs on the active site, inhibiting its reactivity; therefore PRDX5 palmitoylation status determines its antioxidant capacity. S-palmitoylated. Depalmitoylated by ABHD10.

The protein localises to the mitochondrion. The protein resides in the cytoplasm. It localises to the peroxisome matrix. The enzyme catalyses a hydroperoxide + [thioredoxin]-dithiol = an alcohol + [thioredoxin]-disulfide + H2O. Thiol-specific peroxidase that catalyzes the reduction of hydrogen peroxide and organic hydroperoxides to water and alcohols, respectively. Plays a role in cell protection against oxidative stress by detoxifying peroxides and as sensor of hydrogen peroxide-mediated signaling events. The polypeptide is Peroxiredoxin-5, mitochondrial (PRDX5) (Papio hamadryas (Hamadryas baboon)).